Reading from the N-terminus, the 1331-residue chain is DNA-directed RNA polymerase subunit beta' (1331 aa).

4 residues coordinate Zn(2+): Cys-220, Cys-293, Cys-300, and Cys-303. Disordered regions lie at residues 1236-1257 (DFVDEGTSRSPNGYSNVVTNDN) and 1294-1331 (ISGDELISDDTPIPSDVQGKAPVIDDDAMIDDNWMKDQ). A compositionally biased stretch (polar residues) spans 1243–1257 (SRSPNGYSNVVTNDN).

It belongs to the RNA polymerase beta' chain family. RpoC2 subfamily. In cyanobacteria the RNAP catalytic core is composed of 2 alpha, 1 beta, 1 beta', 1 gamma and 1 omega subunit. When a sigma factor is associated with the core the holoenzyme is formed, which can initiate transcription. Zn(2+) serves as cofactor.

It catalyses the reaction RNA(n) + a ribonucleoside 5'-triphosphate = RNA(n+1) + diphosphate. DNA-dependent RNA polymerase catalyzes the transcription of DNA into RNA using the four ribonucleoside triphosphates as substrates. The sequence is that of DNA-directed RNA polymerase subunit beta' from Picosynechococcus sp. (strain ATCC 27264 / PCC 7002 / PR-6) (Agmenellum quadruplicatum).